Consider the following 150-residue polypeptide: 3-hydroxyacyl-[acyl-carrier-protein] dehydratase FabZ (150 aa).

H54 is a catalytic residue.

This sequence belongs to the thioester dehydratase family. FabZ subfamily.

The protein resides in the cytoplasm. It catalyses the reaction a (3R)-hydroxyacyl-[ACP] = a (2E)-enoyl-[ACP] + H2O. Its function is as follows. Involved in unsaturated fatty acids biosynthesis. Catalyzes the dehydration of short chain beta-hydroxyacyl-ACPs and long chain saturated and unsaturated beta-hydroxyacyl-ACPs. The sequence is that of 3-hydroxyacyl-[acyl-carrier-protein] dehydratase FabZ from Vibrio campbellii (strain ATCC BAA-1116).